Consider the following 437-residue polypeptide: Eukaryotic peptide chain release factor subunit 1 (437 aa).

Alanine 2 bears the N-acetylalanine mark. Positions 61-64 (NIKS) match the NIKS motif; plays an important role in translational termination motif. The residue at position 63 (lysine 63) is a 4-hydroxylysine. Residue lysine 87 forms a Glycyl lysine isopeptide (Lys-Gly) (interchain with G-Cter in SUMO2) linkage. Residue glutamine 185 is modified to N5-methylglutamine. Threonine 347 is subject to Phosphothreonine. Lysine 404 participates in a covalent cross-link: Glycyl lysine isopeptide (Lys-Gly) (interchain with G-Cter in SUMO2).

Belongs to the eukaryotic release factor 1 family. Component of the eRF1-eRF3-GTP ternary complex, composed of ETF1/ERF1 and eRF3 (GSPT1/ERF3A or GSPT2/ERF3B) and GTP. Component of the transient SURF (SMG1-UPF1-eRF1-eRF3) complex. Interacts with JMJD4. The ETF1-GSPT1 complex interacts with JMJD4. Hydroxylation at Lys-63 by JMJD4 promotes its translational termination efficiency. In terms of processing, methylated at Gln-185 by N6AMT1. Post-translationally, ubiquitinated via 'Lys-6'-linked polyubiquitin chains by RNF14 and RNF25 in response to ribosome collisions (ribosome stalling), leading to its degradation by the proteasome and rescue of stalled ribosomes.

Its subcellular location is the cytoplasm. Functionally, component of the eRF1-eRF3-GTP ternary complex, a ternary complex that mediates translation termination in response to the termination codons. The eRF1-eRF3-GTP complex binds to a stop codon in the ribosomal A-site. ETF1/ERF1 is responsible for stop codon recognition and inducing hydrolysis of peptidyl-tRNA. Following GTP hydrolysis, eRF3 (GSPT1/ERF3A or GSPT2/ERF3B) dissociates, permitting ETF1/eRF1 to accommodate fully in the A-site, followed by hydrolysis of peptidyl-tRNA. Component of the transient SURF complex which recruits UPF1 to stalled ribosomes in the context of nonsense-mediated decay (NMD) of mRNAs containing premature stop codons. Required for SHFL-mediated translation termination which inhibits programmed ribosomal frameshifting (-1PRF) of mRNA from viruses and cellular genes. The protein is Eukaryotic peptide chain release factor subunit 1 (ETF1) of Pongo abelii (Sumatran orangutan).